Consider the following 50-residue polypeptide: Photosystem II reaction center protein M (50 aa).

A helical transmembrane segment spans residues 7 to 27 (GFIASLLFVGVPTIFLIGLFI).

It belongs to the PsbM family. As to quaternary structure, PSII is composed of 1 copy each of membrane proteins PsbA, PsbB, PsbC, PsbD, PsbE, PsbF, PsbH, PsbI, PsbJ, PsbK, PsbL, PsbM, PsbT, PsbX, PsbY, Psb30/Ycf12, peripheral proteins PsbO, CyanoQ (PsbQ), PsbU, PsbV and a large number of cofactors. It forms dimeric complexes.

It localises to the cellular thylakoid membrane. Its function is as follows. One of the components of the core complex of photosystem II (PSII). PSII is a light-driven water:plastoquinone oxidoreductase that uses light energy to abstract electrons from H(2)O, generating O(2) and a proton gradient subsequently used for ATP formation. It consists of a core antenna complex that captures photons, and an electron transfer chain that converts photonic excitation into a charge separation. This subunit is found at the monomer-monomer interface. This chain is Photosystem II reaction center protein M, found in Prochlorococcus marinus (strain MIT 9312).